The following is a 238-amino-acid chain: Ribosomal RNA small subunit methyltransferase G (238 aa).

Residues Gly-77, Phe-82, 128–129 (AE), and Arg-147 each bind S-adenosyl-L-methionine.

The protein belongs to the methyltransferase superfamily. RNA methyltransferase RsmG family.

The protein resides in the cytoplasm. Specifically methylates the N7 position of guanine in position 535 of 16S rRNA. In Brevibacillus brevis (strain 47 / JCM 6285 / NBRC 100599), this protein is Ribosomal RNA small subunit methyltransferase G.